Consider the following 319-residue polypeptide: Malate dehydrogenase (319 aa).

NAD(+) contacts are provided by residues 10–15 (GAGNIG) and Asp-34. Arg-83 and Arg-89 together coordinate substrate. NAD(+) contacts are provided by residues Asn-96 and 119 to 121 (ITN). Substrate-binding residues include Asn-121 and Arg-152. The active-site Proton acceptor is the His-176.

The protein belongs to the LDH/MDH superfamily. MDH type 3 family.

It catalyses the reaction (S)-malate + NAD(+) = oxaloacetate + NADH + H(+). Catalyzes the reversible oxidation of malate to oxaloacetate. This is Malate dehydrogenase from Francisella novicida.